The sequence spans 44 residues: Cytochrome b559 subunit beta (44 aa).

A helical membrane pass occupies residues 19–35 (WLAIHGLAIPTVFFLGA). H23 provides a ligand contact to heme.

This sequence belongs to the PsbE/PsbF family. In terms of assembly, heterodimer of an alpha subunit and a beta subunit. PSII is composed of 1 copy each of membrane proteins PsbA, PsbB, PsbC, PsbD, PsbE, PsbF, PsbH, PsbI, PsbJ, PsbK, PsbL, PsbM, PsbT, PsbX, PsbY, PsbZ, Psb30/Ycf12, at least 3 peripheral proteins of the oxygen-evolving complex and a large number of cofactors. It forms dimeric complexes. The cofactor is heme b.

It localises to the plastid. Its subcellular location is the chloroplast thylakoid membrane. In terms of biological role, this b-type cytochrome is tightly associated with the reaction center of photosystem II (PSII). PSII is a light-driven water:plastoquinone oxidoreductase that uses light energy to abstract electrons from H(2)O, generating O(2) and a proton gradient subsequently used for ATP formation. It consists of a core antenna complex that captures photons, and an electron transfer chain that converts photonic excitation into a charge separation. The protein is Cytochrome b559 subunit beta of Porphyra purpurea (Red seaweed).